A 762-amino-acid polypeptide reads, in one-letter code: MYHPNMFESHHHMFDMTPKNSENDLGITGSHEEDFETKSGAEVTMENPLEEELQDPNQRPNKKKRYHRHTQRQIQELESFFKECPHPDDKQRKELSRELSLEPLQVKFWFQNKRTQMKAQHERHENQILKSENDKLRAENNRYKDALSNATCPNCGGPAAIGEMSFDEQHLRIENARLREEIDRISAIAAKYVGKPLMANSSSFPQLSSSHHIPSRSLDLEVGNFGNNNNSHTGFVGEMFGSSDILRSVSIPSEADKPMIVELAVAAMEELVRMAQTGDPLWVSSDNSVEILNEEEYFRTFPRGIGPKPIGLRSEASRESTVVIMNHINLIEILMDVNQWSSVFCGIVSRALTLEVLSTGVAGNYNGALQVMTAEFQVPSPLVPTRENYFVRYCKQHSDGIWAVVDVSLDSLRPSPITRSRRRPSGCLIQELQNGYSKVTWVEHIEVDDRSVHNMYKPLVNTGLAFGAKRWVATLDRQCERLASSMASNIPACDLSVITSPEGRKSMLKLAERMVMSFCTGVGASTAHAWTTLSTTGSDDVRVMTRKSMDDPGRPPGIVLSAATSFWIPVAPKRVFDFLRDENSRSEWDILSNGGLVQEMAHIANGRDPGNSVSLLRVNSGNSGQSNMLILQESCTDASGSYVIYAPVDIIAMNVVLSGGDPDYVALLPSGFAILPDGSARGGGGSANASAGAGVEGGGEGNNLEVVTTTGSCGGSLLTVAFQILVDSVPTAKLSLGSVATVNSLIKCTVERIKAALACDGA.

A disordered region spans residues 13–72 (MFDMTPKNSENDLGITGSHEEDFETKSGAEVTMENPLEEELQDPNQRPNKKKRYHRHTQR). The segment covering 30-39 (SHEEDFETKS) has biased composition (basic and acidic residues). Basic residues predominate over residues 60–71 (PNKKKRYHRHTQ). The homeobox DNA-binding region spans 62–121 (KKKRYHRHTQRQIQELESFFKECPHPDDKQRKELSRELSLEPLQVKFWFQNKRTQMKAQH). Residues 110–192 (FQNKRTQMKA…DRISAIAAKY (83 aa)) adopt a coiled-coil conformation. An START domain is found at 253 to 484 (SEADKPMIVE…LDRQCERLAS (232 aa)).

It belongs to the HD-ZIP homeobox family. Class IV subfamily. Interacts with GAI/RGA2, RGA/RGA1/GRS, RGL2/SCL19 and PDF2. Interacts with AIL7/PLT7, ANT, BBM and AIL1.

The protein localises to the nucleus. Functionally, probable transcription factor involved in cell specification and pattern formation during embryogenesis. Binds to the L1 box DNA sequence 5'-TAAATG[CT]A-3'. Plays a role in maintaining the identity of L1 cells, possibly by interacting with their L1 box or other target-gene promoters; binds to the LIP1 gene promoter and stimulates its expression upon imbibition. Acts as a positive regulator of gibberellins (GAs)-regulated epidermal gene expression (e.g. LIP1, LIP2, LTP1, FDH and PDF1). Functionally redundant to PDF2. Seems to promote cell differentiation. In Arabidopsis thaliana (Mouse-ear cress), this protein is Homeobox-leucine zipper protein MERISTEM L1.